The primary structure comprises 777 residues: Zinc finger FYVE domain-containing protein 1 (777 aa).

The required for localization in the lipid droplets stretch occupies residues 416–777; that stretch reads MAHSSFFPDE…FNCNKKPGDL (362 aa). FYVE-type zinc fingers lie at residues 598 to 659 and 715 to 775; these read NSQI…EARN and DHEI…KKPG. Cys604, Cys607, Cys620, Cys623, Cys628, Cys631, Cys651, Cys654, Cys721, Cys724, Cys737, Cys740, Cys745, Cys748, Cys767, and Cys770 together coordinate Zn(2+).

As to quaternary structure, interacts with RAB18 (in GTP-bound form). Interacts with BSCL2 in a RAB18-dependent manner. Interacts with ZW10. (Microbial infection) Interacts with SARS coronavirus-2/SARS-CoV-2 non-structural protein 6 (nsp6); the interaction is independent of PtdIns3P-binding and leads to endoplasmic reticulum (ER) and double membrane vesicles (DMVs) binding to lipid droplets. Highly expressed in heart. Also detected in the testis. As to expression, expressed in all tissues examined, including, brain, placenta, lung, liver, skeletal muscle, pancreas and kidney. Highly expressed in heart.

The protein resides in the golgi apparatus. Its subcellular location is the golgi stack. It is found in the endoplasmic reticulum. The protein localises to the lipid droplet. It localises to the preautophagosomal structure. The protein resides in the mitochondrion. Functionally, plays a role in the formation of lipid droplets (LDs) which are storage organelles at the center of lipid and energy homeostasis. Regulates the morphology, size and distribution of LDs. Mediates the formation of endoplasmic reticulum-lipid droplets (ER-LD) contacts by forming a complex with RAB18 and ZW10. Binds to phosphatidylinositol 3-phosphate (PtdIns3P) through FYVE-type zinc finger. (Microbial infection) Upon SARS coronavirus-2/SARS-CoV-2 infection, mediates through binding with non-structural protein 6 (nsp6) the replication organelle-lipid droplet association required to sustain viral replication. This chain is Zinc finger FYVE domain-containing protein 1 (ZFYVE1), found in Homo sapiens (Human).